Consider the following 433-residue polypeptide: Serine hydroxymethyltransferase (433 aa).

122-124 (AHV) serves as a coordination point for (6S)-5,6,7,8-tetrahydrofolate. Position 228 is an N6-(pyridoxal phosphate)lysine (lysine 228).

It belongs to the SHMT family. As to quaternary structure, homodimer. The cofactor is pyridoxal 5'-phosphate.

The protein localises to the cytoplasm. It participates in amino-acid biosynthesis; glycine biosynthesis; glycine from L-serine: step 1/1. Functionally, catalyzes the reversible interconversion of serine and glycine with a modified folate serving as the one-carbon carrier. Also exhibits a pteridine-independent aldolase activity toward beta-hydroxyamino acids, producing glycine and aldehydes, via a retro-aldol mechanism. The chain is Serine hydroxymethyltransferase from Sulfolobus acidocaldarius (strain ATCC 33909 / DSM 639 / JCM 8929 / NBRC 15157 / NCIMB 11770).